Reading from the N-terminus, the 205-residue chain is Protein MIS12 homolog (205 aa).

Residues 108-205 (PYSEEDFQHL…EKESKRLKIS (98 aa)) are a coiled coil.

Belongs to the mis12 family. Component of the MIS12 complex composed of MIS12, DSN1, NSL1 and PMF1. Also interacts with KNL1, CBX3, CBX5, NDC80 and ZWINT.

It is found in the chromosome. It localises to the centromere. The protein localises to the kinetochore. Its function is as follows. Part of the MIS12 complex which is required for normal chromosome alignment and segregation and for kinetochore formation during mitosis. Essential for proper kinetochore microtubule attachments. This Homo sapiens (Human) protein is Protein MIS12 homolog.